The sequence spans 399 residues: Na(+)/H(+) antiporter NhaA (399 aa).

11 consecutive transmembrane segments (helical) span residues 14-34 (AGGI…NSPL), 59-79 (LIHW…GLEV), 95-115 (SLPT…YLLF), 124-144 (AGWA…MALL), 154-174 (VFLL…IAMF), 177-197 (TDLS…LVGL), 213-233 (LILW…GVII), 261-281 (FIIL…PMSF), 290-310 (VGIA…FSYI), 331-351 (VALM…LAFV), and 363-383 (LGIL…LAKV).

The protein belongs to the NhaA Na(+)/H(+) (TC 2.A.33) antiporter family.

It localises to the cell inner membrane. The enzyme catalyses Na(+)(in) + 2 H(+)(out) = Na(+)(out) + 2 H(+)(in). In terms of biological role, na(+)/H(+) antiporter that extrudes sodium in exchange for external protons. In Shewanella sediminis (strain HAW-EB3), this protein is Na(+)/H(+) antiporter NhaA.